The primary structure comprises 541 residues: Forkhead box protein O (541 aa).

A compositionally biased stretch (polar residues) spans N118–P150. 2 disordered regions span residues N118–T168 and W252–K291. Residues W175–R268 constitute a DNA-binding region (fork-head). Position 273 is a phosphothreonine (T273). Residue S319 is modified to Phosphoserine; by CaMK2.

In terms of assembly, interacts with rle-1. Interacts with unc-43 and tax-6. Interacts with jnk-1. Interacts with ftt-2. Interacts with prmt-1. Interacts with hcf-1. In terms of processing, phosphorylated by akt-1 and/or akt-2. Phosphorylated by sgk-1. Phosphorylated by unc-43. Phosphorylated by jnk-1. Dephosphorylated by tax-6 in vitro. Ubiquitinated. Ubiquitination by rle-1 leads to proteasome-mediated degradation. Post-translationally, methylation by prmt-1 prevents phosphorylation and promotes translocation to the nucleus to allow for daf-16-dependent transcription. As to expression, isoform b and isoform c are expressed in ectoderm, muscles, intestine and neurons. Isoform b is also expressed in the pharynx. The intestine appears to be the primary site of longevity function.

It localises to the nucleus. Its subcellular location is the cytoplasm. Functionally, forkhead-type transcription factor. Binds to the promoters of genes that contain the daf-16/FOXO binding element (DBE), TTGTTTAC, in their regulatory region. Functions in the Insulin/IGF-1-like signaling (IIS) mediated pathway which affects lipogenesis, lifespan, starvation survival, heat shock and oxidative stress responses, sleep, associative memory, and dauer formation. Longevity signaling predominantly arises from expression in the intestine. Acts in the intestine to mediate the role of slo-1 in age-associated decline in motor activity and longevity. Transcriptional activity of daf-16/FOXO is negatively regulated by interaction with host cell factor homolog hcf-1; and by cytoplasmic sequestration by association with ftt-2. Inhibition is required for the carbon dioxide (CO2) avoidance response. Upon loss of inhibition, daf-16 translocates to the nucleus to regulate genes that result in delayed reproduction and growth while increasing stress resistance starvation tolerance and longevity. Association with arginine methyltransferase prmt-1 prevents phosphorylation and allows for translocation to the nucleus and the subsequent transcription of longevity-related genes. Modulation of its activity by cGMP levels in sensory neurons regulates lifespan. Has a protective role against muscle dystrophy. Involved in mediating protection against aberrant protein aggregation proteotoxicity. Influences transcription of genes that code for proteins involved in immunity as part of a general stress response. Targets genes that inhibit and stimulate tumor growth. Targets kinases, phosphatases and transcription factors that are primarily involved in signaling and gene regulation. Thought to regulate ins-7 in FOXO-to-FOXO signaling, which coordinates daf-16 expression. Activity is positively regulated by shc-1-mediated inhibition of daf-2 and activation of JNK pathway. Through the regulation of its activity by shc-1-mediated inhibition of daf-2 and activation of JNK pathway, plays a role in maintaining the integrity of the gonad. Functions by indirect interaction with jnk-1 of the mitogen-activated protein kinase (MAPK) pathway. Involved in increased proteasome activity by activating expression of rpn-6.1 in response to proteotoxic stress, leading to enhanced assembly of the 26S proteasome, followed by higher proteasome activity. Also regulates proteasome activity in the intestine by preventing expression of deubiquitinase ubh-4. Represses transcription of natc-1. Involved in regulation of srh-234 expression. Binds to the promoter of the AMPK-gamma regulatory subunit, aakg-4, and activates its transcription. Also activates transcription of AMPK-gamma regulatory subunit, aakg-1. Maintains endoplasmic reticulum (ER) function by inducing protein degradation and elimination to remove misfolded secretory proteins from the ER independently of the ire-1/xbp-1 unfolded protein response pathway. Regulates epidermal innate immunity to nematophagous fungal infection and physical wounding which trigger bli-3 induced ROS release, leading to daf-16 activation independently of daf-2 signaling. May negatively regulate resistance to stress caused by oxidized cholesterol adducts by preventing the activation of daf-9 and nuclear hormone receptor daf-12, two members of the steroid signaling pathway. Promotes apoptosis during embryonic development. Probably through the regulation of the autophagy genes atg-18 and atg-16.2, plays a role in regulating stem cell number in the germline during larval development. Plays a role in learning and memory; including associative memory, and aversive gustatory associated learning known as salt avoidance learning. Plays a role in regulating gene transcription in response to white light exposure. Binds to the promoter of dex-1 to positively regulate its expression in seam cells during the dauer phase. Plays a role in transgenerational lipid accumulation in response to a high-fat diet. Its function is as follows. Functions in the Insulin/IGF-1-like signaling (IIS) mediated pathway. May play a role in lifespan modulation, but less significant than that played by isoforms d and f. Functions in the Insulin/IGF-1-like signaling (IIS) mediated pathway. Transcript level in the early adult may play a role in lifespan modulation, but effect is more significant than that played by isoform a. The protein is Forkhead box protein O of Caenorhabditis elegans.